Reading from the N-terminus, the 146-residue chain is MKLHELQPAEGSRKVRNRVGRGIGSGNGKTAGKGHKGQKARSGGGVRPGFEGGQNPLYRRLPKRGFTNIHRKEYTVVNLDVLNRFEAGTEVTPELLIETKTVKNVKHGIKVLGNGNLDKNLTVKAHKFSASAVKAIEAAGGKTEVV.

Positions 1–13 (MKLHELQPAEGSR) are enriched in basic and acidic residues. Residues 1–58 (MKLHELQPAEGSRKVRNRVGRGIGSGNGKTAGKGHKGQKARSGGGVRPGFEGGQNPLY) are disordered. 2 stretches are compositionally biased toward gly residues: residues 21 to 31 (RGIGSGNGKTA) and 42 to 52 (SGGGVRPGFEG).

Belongs to the universal ribosomal protein uL15 family. As to quaternary structure, part of the 50S ribosomal subunit.

In terms of biological role, binds to the 23S rRNA. The sequence is that of Large ribosomal subunit protein uL15 from Shouchella clausii (strain KSM-K16) (Alkalihalobacillus clausii).